We begin with the raw amino-acid sequence, 188 residues long: D-glycero-beta-D-manno-heptose-1,7-bisphosphate 7-phosphatase (188 aa).

Residues C92, H94, C107, and C109 each coordinate Zn(2+).

This sequence belongs to the GmhB family.

The protein resides in the cytoplasm. It catalyses the reaction D-glycero-beta-D-manno-heptose 1,7-bisphosphate + H2O = D-glycero-beta-D-manno-heptose 1-phosphate + phosphate. It participates in nucleotide-sugar biosynthesis; ADP-L-glycero-beta-D-manno-heptose biosynthesis; ADP-L-glycero-beta-D-manno-heptose from D-glycero-beta-D-manno-heptose 7-phosphate: step 2/4. Its pathway is bacterial outer membrane biogenesis; LPS core biosynthesis. In terms of biological role, converts the D-glycero-beta-D-manno-heptose 1,7-bisphosphate intermediate into D-glycero-beta-D-manno-heptose 1-phosphate by removing the phosphate group at the C-7 position. This chain is D-glycero-beta-D-manno-heptose-1,7-bisphosphate 7-phosphatase (gmhB1), found in Photorhabdus laumondii subsp. laumondii (strain DSM 15139 / CIP 105565 / TT01) (Photorhabdus luminescens subsp. laumondii).